We begin with the raw amino-acid sequence, 536 residues long: CTP synthase (536 aa).

The amidoligase domain stretch occupies residues 1–267; that stretch reads MSKFVFVTGG…CKETLRCLDL (267 aa). Serine 13 contributes to the CTP binding site. A UTP-binding site is contributed by serine 13. ATP-binding positions include 14-19 and aspartate 71; that span reads SIGKGI. Mg(2+) is bound by residues aspartate 71 and glutamate 141. Residues 148-150, 188-193, and lysine 224 contribute to the CTP site; these read DIE and KTKPTQ. UTP-binding positions include 188–193 and lysine 224; that span reads KTKPTQ. The region spanning 292-534 is the Glutamine amidotransferase type-1 domain; that stretch reads KVALVGKYIE…IKASREKLEQ (243 aa). Residue glycine 354 participates in L-glutamine binding. The active-site Nucleophile; for glutamine hydrolysis is the cysteine 381. L-glutamine is bound by residues 382 to 385, glutamate 405, and arginine 462; that span reads LGMQ. Active-site residues include histidine 507 and glutamate 509.

This sequence belongs to the CTP synthase family. As to quaternary structure, homotetramer.

The catalysed reaction is UTP + L-glutamine + ATP + H2O = CTP + L-glutamate + ADP + phosphate + 2 H(+). It catalyses the reaction L-glutamine + H2O = L-glutamate + NH4(+). It carries out the reaction UTP + NH4(+) + ATP = CTP + ADP + phosphate + 2 H(+). The protein operates within pyrimidine metabolism; CTP biosynthesis via de novo pathway; CTP from UDP: step 2/2. Its activity is regulated as follows. Allosterically activated by GTP, when glutamine is the substrate; GTP has no effect on the reaction when ammonia is the substrate. The allosteric effector GTP functions by stabilizing the protein conformation that binds the tetrahedral intermediate(s) formed during glutamine hydrolysis. Inhibited by the product CTP, via allosteric rather than competitive inhibition. Its function is as follows. Catalyzes the ATP-dependent amination of UTP to CTP with either L-glutamine or ammonia as the source of nitrogen. Regulates intracellular CTP levels through interactions with the four ribonucleotide triphosphates. This chain is CTP synthase, found in Prochlorococcus marinus (strain MIT 9515).